Reading from the N-terminus, the 404-residue chain is MKRIRDLWVRTNLIKKIGIGVVIGLLLGILLPDVTAIGILGQLFVGALKAIAPLLVFALVAQAISHQRSGQQTNMTLIIVLYLLGTFLAALVAVIANYLFPLTLTLNTPVNTELSPPQGIVQVFQTLLLKLVDNPINALATANYIGVLAWALIFGLALKSVPSDFKHLIKTAADVTSQIVVWIINVAPIGIMGLVFSTVSENGISILSDYALLILVLVGTMLFVALVVNPLLAFVLTHQNPYPLVFRCLKDSGLTAFFTRSSAANIPVNLQLCEDLGLSQATYLVSIPLGAMINMGGAAITINVLTLAAVNTFGIQIDFLTALLLSVVAAISACGASGVTGGSLLLIPVACSLFGISSDLAMQVVGVGFIVGVIQDSCETALNSSTDVLFTAIAENAFWKQKKA.

A run of 9 helical transmembrane segments spans residues 17 to 37 (IGIG…VTAI), 39 to 59 (ILGQ…VFAL), 75 to 95 (MTLI…VAVI), 138 to 158 (ALAT…GLAL), 179 to 199 (IVVW…FSTV), 212 to 232 (LLIL…NPLL), 287 to 307 (IPLG…VLTL), 319 to 339 (FLTA…ASGV), and 354 to 374 (FGIS…VGVI).

It belongs to the dicarboxylate/amino acid:cation symporter (DAACS) (TC 2.A.23) family.

It is found in the cell membrane. It carries out the reaction L-serine(in) + Na(+)(in) = L-serine(out) + Na(+)(out). The catalysed reaction is L-threonine(in) + Na(+)(in) = L-threonine(out) + Na(+)(out). In terms of biological role, involved in the import of serine and threonine into the cell, with the concomitant import of sodium (symport system). The chain is Serine/threonine transporter SstT from Streptococcus equi subsp. equi (strain 4047).